The chain runs to 161 residues: Beta-lactoglobulin-1 (161 aa).

Intrachain disulfides connect cysteine 66–cysteine 159 and cysteine 106–cysteine 119.

It belongs to the calycin superfamily. Lipocalin family. Monomer. In terms of tissue distribution, synthesized in mammary gland and secreted in milk.

It localises to the secreted. Functionally, primary component of whey, it binds retinol and is probably involved in the transport of that molecule. In Canis lupus familiaris (Dog), this protein is Beta-lactoglobulin-1 (LGB1).